A 599-amino-acid polypeptide reads, in one-letter code: Leucine zipper putative tumor suppressor 1 (599 aa).

A lipid anchor (N-myristoyl glycine) is attached at Gly-2. 2 disordered regions span residues 135–190 and 288–324; these read GAIL…TTSS and EFASGQTFEERPRRTRDELECLEPKSKLKPPSQKSQR. Residues 153–162 are compositionally biased toward basic and acidic residues; sequence PPDKPKEQEL. The segment covering 174–190 has biased composition (polar residues); that stretch reads SGRNSMSSLPTHSTTSS. A coiled-coil region spans residues 256–572; that stretch reads LSTDECTIQE…LEKALQQLAR (317 aa). A compositionally biased stretch (basic and acidic residues) spans 288–313; sequence EFASGQTFEERPRRTRDELECLEPKS.

It belongs to the LZTS family. Binds EEF1G, TLK2 and CDK1. In terms of processing, phosphorylated on serine residues. Hyperphosphorylated by the cAMP-dependent kinase PKA during cell-cycle progression.

The protein localises to the cytoplasm. Its subcellular location is the cell membrane. The protein resides in the cell projection. It localises to the dendritic spine. It is found in the postsynaptic density. The protein localises to the synapse. Its function is as follows. Involved in the regulation of cell growth. May stabilize the active CDC2-cyclin B1 complex and thereby contribute to the regulation of the cell cycle and the prevention of uncontrolled cell proliferation. May act as tumor suppressor. This Mus musculus (Mouse) protein is Leucine zipper putative tumor suppressor 1 (Lzts1).